We begin with the raw amino-acid sequence, 80 residues long: Putative defensin-like protein 28 (80 aa).

Residues 1 to 22 (MLRANVVVSLVIFAALMQCMNG) form the signal peptide.

This sequence belongs to the DEFL family.

It is found in the secreted. The polypeptide is Putative defensin-like protein 28 (Arabidopsis thaliana (Mouse-ear cress)).